Here is a 926-residue protein sequence, read N- to C-terminus: OTU domain-containing protein 7A (926 aa).

Ser121 carries the post-translational modification Phosphoserine. Residues 170–413 are TRAF-binding; that stretch reads ERDLIEQATM…AVDPGKDWEW (244 aa). The catalytic stretch occupies residues 185–452; sequence AGRLNWWSTV…VTWIRIPSET (268 aa). Residues 201–377 enclose the OTU domain; the sequence is LLPLATTGDG…QAHFSALVSM (177 aa). Residue Asp209 is part of the active site. Cys212 acts as the Nucleophile in catalysis. His370 (proton acceptor) is an active-site residue. Disordered stretches follow at residues 455-517, 540-615, and 671-779; these read PLAQ…DSVA, GLVH…GDAW, and EQEQ…ARQS. Positions 484 to 494 are enriched in low complexity; that stretch reads VCSNSNSNNGK. Residues 495-513 are compositionally biased toward basic and acidic residues; sequence NGKDKEKEKQRKDKDKTRA. Residues 497–512 carry the Nuclear localization signal motif; that stretch reads KDKEKEKQRKDKDKTR. 3 stretches are compositionally biased toward low complexity: residues 579 to 595, 680 to 691, and 731 to 750; these read GASASTSPSEKTTPSPT, AAAAAAATATAT, and SPGTGASARAARAAGGAASP. Gly residues predominate over residues 751-767; the sequence is GPGGGARRAAPGTGGPT. Arg880 carries the omega-N-methylarginine modification. The A20-type zinc-finger motif lies at 884 to 919; the sequence is GPAQRRCQRENCAFYGRAETEHFCSYCYREELRRRR. Positions 890, 895, 907, and 910 each coordinate Zn(2+).

This sequence belongs to the peptidase C64 family.

It is found in the cytoplasm. The protein resides in the nucleus. It carries out the reaction Thiol-dependent hydrolysis of ester, thioester, amide, peptide and isopeptide bonds formed by the C-terminal Gly of ubiquitin (a 76-residue protein attached to proteins as an intracellular targeting signal).. In terms of biological role, deubiquitinase, which cleaves 'Lys-11'-linked polyubiquitin chains. In Mus musculus (Mouse), this protein is OTU domain-containing protein 7A (Otud7a).